A 308-amino-acid chain; its full sequence is Isoaspartyl peptidase/L-asparaginase (308 aa).

M1 is modified (N-acetylmethionine). Residue T168 is the Nucleophile of the active site. Substrate is bound by residues 196-199 (RVGD) and 219-222 (TGHG).

Belongs to the Ntn-hydrolase family. In terms of assembly, heterodimer of an alpha and beta chain produced by autocleavage. This heterodimer may then dimerize in turn, giving rise to a heterotetramer. In terms of processing, cleaved into an alpha and beta chain by autocatalysis; this activates the enzyme. The N-terminal residue of the beta subunit is responsible for the nucleophile hydrolase activity.

It is found in the cytoplasm. It catalyses the reaction L-asparagine + H2O = L-aspartate + NH4(+). The catalysed reaction is Cleavage of a beta-linked Asp residue from the N-terminus of a polypeptide.. Has both L-asparaginase and beta-aspartyl peptidase activity. May be involved in the production of L-aspartate, which can act as an excitatory neurotransmitter in some brain regions. Is highly active with L-Asp beta-methyl ester. Besides, has catalytic activity toward beta-aspartyl dipeptides and their methyl esters, including beta-L-Asp-L-Phe, beta-L-Asp-L-Phe methyl ester (aspartame), beta-L-Asp-L-Ala, beta-L-Asp-L-Leu and beta-L-Asp-L-Lys. Does not have aspartylglucosaminidase activity and is inactive toward GlcNAc-L-Asn. Likewise, has no activity toward glutamine. In Bos taurus (Bovine), this protein is Isoaspartyl peptidase/L-asparaginase (ASRGL1).